The following is an 800-amino-acid chain: Mitogen-activated protein kinase kinase kinase 20 (800 aa).

S2 carries the post-translational modification N-acetylserine. Phosphoserine; by autocatalysis occurs at positions 2, 3, and 7. One can recognise a Protein kinase domain in the interval 16-277 (LQFFENCGGG…SLPDKCNSFL (262 aa)). ATP contacts are provided by residues 22–30 (CGGGSFGSV) and K45. D133 serves as the catalytic Proton acceptor. T161 is modified (phosphothreonine; by autocatalysis). Residue S165 is modified to Phosphoserine; by autocatalysis. S275 carries the phosphoserine modification. Residues 287 to 308 (IEATLERLKKLERDLSFKEQEL) form a leucine-zipper region. S302 carries the post-translational modification Phosphoserine; by autocatalysis. Residues W339, E429, K434, D454, and S567 each carry the phosphoserine modification. An SAM domain is found at 339-410 (WTEDDVYCWV…KSAIEKLTHD (72 aa)). At T586 the chain carries Phosphothreonine; by autocatalysis. A Phosphoserine; by autocatalysis modification is found at S587. Phosphoserine is present on residues S593 and S599. T628 bears the Phosphothreonine mark. 3 positions are modified to phosphoserine: S633, S637, and S648. Phosphoserine; by autocatalysis occurs at positions 649 and 660. The span at 652–666 (LNSRDSGFSSGNTDT) shows a compositional bias: polar residues. Positions 652–800 (LNSRDSGFSS…RGDHRGWRNF (149 aa)) are disordered. Residue T664 is modified to Phosphothreonine; by autocatalysis. The span at 667-678 (SSERGRYSDRSR) shows a compositional bias: basic and acidic residues. The sensing domain (S) stretch occupies residues 670–713 (RGRYSDRSRNKYGRGSISLNSSPRGRYSGKSQHSTPSRGRYPGK). The residue at position 685 (S685) is a Phosphoserine. Polar residues-rich tracts occupy residues 686 to 706 (ISLNSSPRGRYSGKSQHSTPS) and 717 to 726 (VSQSALNPHQ). A phosphoserine; by autocatalysis mark is found at S718 and S720. S727 and S733 each carry phosphoserine. Residues 728-738 (PDFKRSPRDLH) are compositionally biased toward basic and acidic residues. A Phosphothreonine; by autocatalysis modification is found at T742. Basic and acidic residues-rich tracts occupy residues 750 to 763 (PETDSRASEEDSKV) and 785 to 800 (TNKERARGDHRGWRNF). The tract at residues 774–800 (RKKPHRPSPAKTNKERARGDHRGWRNF) is C-terminal domain (CTD).

It belongs to the protein kinase superfamily. STE Ser/Thr protein kinase family. MAP kinase kinase kinase subfamily. In terms of assembly, homodimer. Interacts with ZNF33A. Component of a signaling complex containing at least AKAP13, PKN1, MAPK14, MAP3K20 and MAP2K3. Within this complex, AKAP13 interacts directly with PKN1, which in turn recruits MAPK14, MAP2K3 and MAP3K20. Interacts with EIF2AK4/GCN2; promoting EIF2AK4/GCN2 kinase activity. As to quaternary structure, interacts with isoform ZAKbeta. Interacts with isoform ZAKalpha. It depends on Mg(2+) as a cofactor. Activated by phosphorylation by PKN1, followed by autophosphorylation on Thr-161 and Ser-165. Autophosphorylation in response to ribotoxic stress promotes dissociation from colliding ribosomes and activation. As to expression, ubiquitously expressed. Isoform ZAKbeta is the predominant form in all tissues examined, except for liver, in which isoform ZAKalpha is more highly expressed.

The protein localises to the cytoplasm. Its subcellular location is the nucleus. It catalyses the reaction L-seryl-[protein] + ATP = O-phospho-L-seryl-[protein] + ADP + H(+). The enzyme catalyses L-threonyl-[protein] + ATP = O-phospho-L-threonyl-[protein] + ADP + H(+). Activated in response to stress, such as ribosomal stress, osmotic shock and ionizing radiation. Activated by phosphorylation by PKN1, followed by autophosphorylation on Thr-161 and Ser-165. Inhibited by nilotinib, sorafenib, dabrafenib, rebastinib and vemurafenib. Selectively inhibited by N-(3)-((1H-Pyrazolo[3,4-b]pyridin-5-yl)ethynyl)benzenesulfonamide compound 3h. Selectively inhibited by 1,2,3-triazole benzenesulfonamides. Stress-activated component of a protein kinase signal transduction cascade that promotes programmed cell death in response to various stress, such as ribosomal stress, osmotic shock and ionizing radiation. Acts by catalyzing phosphorylation of MAP kinase kinases, leading to activation of the JNK (MAPK8/JNK1, MAPK9/JNK2 and/or MAPK10/JNK3) and MAP kinase p38 (MAPK11, MAPK12, MAPK13 and/or MAPK14) pathways. Activates JNK through phosphorylation of MAP2K4/MKK4 and MAP2K7/MKK7, and MAP kinase p38 gamma (MAPK12) via phosphorylation of MAP2K3/MKK3 and MAP2K6/MKK6. Involved in stress associated with adrenergic stimulation: contributes to cardiac decompensation during periods of acute cardiac stress. May be involved in regulation of S and G2 cell cycle checkpoint by mediating phosphorylation of CHEK2. In terms of biological role, key component of the stress-activated protein kinase signaling cascade in response to ribotoxic stress or UV-B irradiation. Acts as the proximal sensor of ribosome collisions during the ribotoxic stress response (RSR): directly binds to the ribosome by inserting its flexible C-terminus into the ribosomal intersubunit space, thereby acting as a sentinel for colliding ribosomes. Upon ribosome collisions, activates either the stress-activated protein kinase signal transduction cascade or the integrated stress response (ISR), leading to programmed cell death or cell survival, respectively. Dangerous levels of ribosome collisions trigger the autophosphorylation and activation of MAP3K20, which dissociates from colliding ribosomes and phosphorylates MAP kinase kinases, leading to activation of the JNK and MAP kinase p38 pathways that promote programmed cell death. Less dangerous levels of ribosome collisions trigger the integrated stress response (ISR): MAP3K20 activates EIF2AK4/GCN2 independently of its protein-kinase activity, promoting EIF2AK4/GCN2-mediated phosphorylation of EIF2S1/eIF-2-alpha. Also part of the stress-activated protein kinase signaling cascade triggering the NLRP1 inflammasome in response to UV-B irradiation: ribosome collisions activate MAP3K20, which directly phosphorylates NLRP1, leading to activation of the NLRP1 inflammasome and subsequent pyroptosis. NLRP1 is also phosphorylated by MAP kinase p38 downstream of MAP3K20. Also acts as a histone kinase by phosphorylating histone H3 at 'Ser-28' (H3S28ph). Its function is as follows. Isoform that lacks the C-terminal region that mediates ribosome-binding: does not act as a sensor of ribosome collisions in response to ribotoxic stress. May act as an antagonist of isoform ZAKalpha: interacts with isoform ZAKalpha, leading to decrease the expression of isoform ZAKalpha. The protein is Mitogen-activated protein kinase kinase kinase 20 of Homo sapiens (Human).